We begin with the raw amino-acid sequence, 341 residues long: Methionine import ATP-binding protein MetN 2 (341 aa).

One can recognise an ABC transporter domain in the interval 2-241 (IKLNQIVKRY…PQHEVTKRFV (240 aa)). 38 to 45 (GFSGAGKS) is a binding site for ATP.

It belongs to the ABC transporter superfamily. Methionine importer (TC 3.A.1.24) family. In terms of assembly, the complex is composed of two ATP-binding proteins (MetN), two transmembrane proteins (MetI) and a solute-binding protein (MetQ).

It is found in the cell membrane. It catalyses the reaction L-methionine(out) + ATP + H2O = L-methionine(in) + ADP + phosphate + H(+). It carries out the reaction D-methionine(out) + ATP + H2O = D-methionine(in) + ADP + phosphate + H(+). In terms of biological role, part of the ABC transporter complex MetNIQ involved in methionine import. Responsible for energy coupling to the transport system. The polypeptide is Methionine import ATP-binding protein MetN 2 (Staphylococcus epidermidis (strain ATCC 35984 / DSM 28319 / BCRC 17069 / CCUG 31568 / BM 3577 / RP62A)).